We begin with the raw amino-acid sequence, 408 residues long: Myb/SANT-like DNA-binding domain-containing protein 4 (408 aa).

In terms of domain architecture, Myb-like spans L4–R77. Residues H236–L367 are a coiled coil.

The polypeptide is Myb/SANT-like DNA-binding domain-containing protein 4 (msantd4) (Xenopus tropicalis (Western clawed frog)).